The sequence spans 247 residues: Disease resistance protein BAK6 (247 aa).

The N-terminal stretch at 1 to 24 (MAAVQFAAAGVLTGLLALATLASC) is a signal peptide. N-linked (GlcNAc...) asparagine glycosylation is found at Asn-66, Asn-104, and Asn-113. LRR repeat units lie at residues 90 to 114 (LESL…LGNL), 116 to 138 (DLIS…LGSI), 139 to 161 (STLR…SFGN), 162 to 186 (LTSL…LGNI), 188 to 210 (SLQF…VLSL), and 213 to 237 (VGNL…GLRV). N-linked (GlcNAc...) asparagine glycans are attached at residues Asn-150 and Asn-161. A glycan (N-linked (GlcNAc...) asparagine) is linked at Asn-215.

In terms of assembly, interacts with WAK17 isoform 1; the interaction is direct. As to quaternary structure, (Microbial infection) Interacts with G.zeae CFEM1; the interaction is direct. Interacts with G.zeae CFEMN1; the interaction is direct. Interacts with G.zeae CFEM5; the interaction is direct.

Its function is as follows. Contributes to activation of the hypersensitive response, a form of programmed cell death, upon fungal infection. May sense the presence of fungal material and relay the signal to WAK17 isoform 1. This Zea mays (Maize) protein is Disease resistance protein BAK6.